The primary structure comprises 633 residues: Basic helix-loop-helix ARNT-like protein 1 (633 aa).

Residues 1-65 form a disordered region; the sequence is MADQRMDISS…GMDTDKDDQH (65 aa). Phosphoserine; by GSK3-beta is present on serine 17. A compositionally biased stretch (polar residues) spans 24–33; the sequence is ISSSLSTSGM. The Nuclear localization signal motif lies at 36–41; it reads NRKRKG. Residues 79-132 enclose the bHLH domain; it reads NAREAHSQIEKRRRDKMNSFIDELASLVPTCNAMSRKLDKLTVLRMAVQHMKTL. The residue at position 85 (serine 85) is a Phosphoserine. Position 97 is a phosphoserine; by CK2 (serine 97). Positions 149 to 159 match the Nuclear export signal 1 motif; it reads LSDDELKHLIL. Positions 150-222 constitute a PAS 1 domain; it reads SDDELKHLIL…EQLSSSDTAP (73 aa). Lysine 259 is covalently cross-linked (Glycyl lysine isopeptide (Lys-Gly) (interchain with G-Cter in SUMO2 and SUMO3)). Residue lysine 266 forms a Glycyl lysine isopeptide (Lys-Gly) (interchain with G-Cter in SUMO) linkage. Positions 333-403 constitute a PAS 2 domain; the sequence is PQPVNGEIRV…ECHRQVLQTR (71 aa). The Nuclear export signal 2 motif lies at 368-376; the sequence is LAYLPQELL. The PAC domain occupies 408–451; sequence TNCYKFKIKDGSFITLRSRWFSFMNPWTKEVEYIVSTNTVVSTN. Disordered stretches follow at residues 472-499 and 518-555; these read SVLQ…RAGA and GSSP…TPDI. Low complexity predominate over residues 518–528; sequence GSSPSSCGSSP. Position 545 is an N6-acetyllysine (lysine 545).

As to quaternary structure, component of the circadian clock oscillator which includes the CRY1/2 proteins, CLOCK or NPAS2, BMAL1 or BMAL2, CSNK1D and/or CSNK1E, TIMELESS and the PER1/2/3 proteins. Forms a heterodimer with CLOCK. The CLOCK-BMAL1 heterodimer is required for E-box-dependent transactivation, for CLOCK nuclear translocation and degradation, and, for phosphorylation of both CLOCK and BMAL1. Interacts with PER1, PER2, CRY1 and CRY2 and this interaction requires a translocation to the nucleus. Interaction of the CLOCK-BMAL1 heterodimer with PER or CRY inhibits transcription activation. Ubiquitinated, leading to its proteasomal degradation. Deubiquitinated by USP9X. Post-translationally, O-glycosylated; contains O-GlcNAc. O-glycosylation by OGT prevents protein degradation by inhibiting ubiquitination. It also stabilizes the CLOCK-BMAL1 heterodimer thereby increasing CLOCK-BMAL1-mediated transcription of genes in the negative loop of the circadian clock such as PER1/2/3 and CRY1/2. In terms of processing, acetylated on Lys-545 by CLOCK during the repression phase of the circadian cycle. Acetylation facilitates recruitment of CRY1 protein and initiates the repression phase of the circadian cycle. Acetylated at Lys-545 by KAT5 during the activation phase of the cycle, leading to recruitment of the positive transcription elongation factor b (P-TEFb) and BRD4, followed by productive elongation of circadian transcripts. Deacetylated by SIRT1, which may result in decreased protein stability. Phosphorylated upon dimerization with CLOCK. Phosphorylation enhances the transcriptional activity, alters the subcellular localization and decreases the stability of the CLOCK-BMAL1 heterodimer by promoting its degradation. Phosphorylation shows circadian variations in the liver with a peak between CT10 to CT14. Phosphorylation at Ser-97 by CK2 is essential for its nuclear localization, its interaction with CLOCK and controls CLOCK nuclear entry. Dephosphorylation at Ser-85 is important for dimerization with CLOCK and transcriptional activity. Post-translationally, sumoylated on Lys-266 upon dimerization with CLOCK. Predominantly conjugated to poly-SUMO2/3 rather than SUMO1 and the level of these conjugates undergo rhythmic variation, peaking at CT9-CT12. Sumoylation localizes it exclusively to the PML body and promotes its ubiquitination in the PML body, ubiquitin-dependent proteasomal degradation and the transcriptional activity of the CLOCK-BMAL1 heterodimer. In terms of processing, undergoes lysosome-mediated degradation in a time-dependent manner in the liver.

It is found in the nucleus. Its subcellular location is the cytoplasm. The protein localises to the PML body. In terms of biological role, transcriptional activator which forms a core component of the circadian clock. The circadian clock, an internal time-keeping system, regulates various physiological processes through the generation of approximately 24 hour circadian rhythms in gene expression, which are translated into rhythms in metabolism and behavior. It is derived from the Latin roots 'circa' (about) and 'diem' (day) and acts as an important regulator of a wide array of physiological functions including metabolism, sleep, body temperature, blood pressure, endocrine, immune, cardiovascular, and renal function. Consists of two major components: the central clock, residing in the suprachiasmatic nucleus (SCN) of the brain, and the peripheral clocks that are present in nearly every tissue and organ system. Both the central and peripheral clocks can be reset by environmental cues, also known as Zeitgebers (German for 'timegivers'). The predominant Zeitgeber for the central clock is light, which is sensed by retina and signals directly to the SCN. The central clock entrains the peripheral clocks through neuronal and hormonal signals, body temperature and feeding-related cues, aligning all clocks with the external light/dark cycle. Circadian rhythms allow an organism to achieve temporal homeostasis with its environment at the molecular level by regulating gene expression to create a peak of protein expression once every 24 hours to control when a particular physiological process is most active with respect to the solar day. Transcription and translation of core clock components (CLOCK, NPAS2, BMAL1, BMAL2, PER1, PER2, PER3, CRY1 and CRY2) plays a critical role in rhythm generation, whereas delays imposed by post-translational modifications (PTMs) are important for determining the period (tau) of the rhythms (tau refers to the period of a rhythm and is the length, in time, of one complete cycle). A diurnal rhythm is synchronized with the day/night cycle, while the ultradian and infradian rhythms have a period shorter and longer than 24 hours, respectively. Disruptions in the circadian rhythms contribute to the pathology of cardiovascular diseases, cancer, metabolic syndromes and aging. A transcription/translation feedback loop (TTFL) forms the core of the molecular circadian clock mechanism. Transcription factors, CLOCK or NPAS2 and BMAL1 or BMAL2, form the positive limb of the feedback loop, act in the form of a heterodimer and activate the transcription of core clock genes and clock-controlled genes (involved in key metabolic processes), harboring E-box elements (5'-CACGTG-3') within their promoters. The core clock genes: PER1/2/3 and CRY1/2 which are transcriptional repressors form the negative limb of the feedback loop and interact with the CLOCK|NPAS2-BMAL1|BMAL2 heterodimer inhibiting its activity and thereby negatively regulating their own expression. This heterodimer also activates nuclear receptors NR1D1/2 and RORA/B/G, which form a second feedback loop and which activate and repress BMAL1 transcription, respectively. The preferred binding motif for the CLOCK-BMAL1 heterodimer is 5'-CACGTGA-3', which contains a flanking adenine nucleotide at the 3-prime end of the canonical 6-nucleotide E-box sequence. CLOCK specifically binds to the half-site 5'-CAC-3', while BMAL1 binds to the half-site 5'-GTGA-3'. Essential for the rhythmic interaction of CLOCK with ASS1 and plays a critical role in positively regulating CLOCK-mediated acetylation of ASS1. Plays a role in protecting against lethal sepsis by limiting the expression of immune checkpoint protein CD274 in macrophages in a PKM2-dependent manner. This is Basic helix-loop-helix ARNT-like protein 1 (BMAL1) from Tyto alba (Barn owl).